We begin with the raw amino-acid sequence, 324 residues long: Beta-ketoacyl-[acyl-carrier-protein] synthase III (324 aa).

Catalysis depends on residues Cys112 and His249. Residues 250–254 (QANRR) are ACP-binding. Residue Asn279 is part of the active site.

This sequence belongs to the thiolase-like superfamily. FabH family. Homodimer.

Its subcellular location is the cytoplasm. It carries out the reaction malonyl-[ACP] + acetyl-CoA + H(+) = 3-oxobutanoyl-[ACP] + CO2 + CoA. Its pathway is lipid metabolism; fatty acid biosynthesis. Functionally, catalyzes the condensation reaction of fatty acid synthesis by the addition to an acyl acceptor of two carbons from malonyl-ACP. Catalyzes the first condensation reaction which initiates fatty acid synthesis and may therefore play a role in governing the total rate of fatty acid production. Possesses both acetoacetyl-ACP synthase and acetyl transacylase activities. Its substrate specificity determines the biosynthesis of branched-chain and/or straight-chain of fatty acids. The sequence is that of Beta-ketoacyl-[acyl-carrier-protein] synthase III from Streptococcus pyogenes serotype M1.